The following is a 533-amino-acid chain: T-complex protein 1 subunit delta (533 aa).

The segment covering 1 to 15 has biased composition (polar residues); that stretch reads MAQSQVGKGSPSNAT. The tract at residues 1–25 is disordered; it reads MAQSQVGKGSPSNATFRDKEKPQEV. Residues 16–25 are compositionally biased toward basic and acidic residues; sequence FRDKEKPQEV.

Belongs to the TCP-1 chaperonin family. As to quaternary structure, heterooligomeric complex of about 850 to 900 kDa that forms two stacked rings, 12 to 16 nm in diameter.

It localises to the cytoplasm. In terms of biological role, molecular chaperone; assists the folding of proteins upon ATP hydrolysis. Known to play a role, in vitro, in the folding of actin and tubulin. The protein is T-complex protein 1 subunit delta (CCT4) of Debaryomyces hansenii (strain ATCC 36239 / CBS 767 / BCRC 21394 / JCM 1990 / NBRC 0083 / IGC 2968) (Yeast).